The sequence spans 138 residues: Putative pre-16S rRNA nuclease (138 aa).

Belongs to the YqgF nuclease family.

It localises to the cytoplasm. In terms of biological role, could be a nuclease involved in processing of the 5'-end of pre-16S rRNA. The chain is Putative pre-16S rRNA nuclease from Cronobacter sakazakii (strain ATCC BAA-894) (Enterobacter sakazakii).